The chain runs to 146 residues: DNA-directed RNA polymerases II, IV and V subunit 8B (146 aa).

The protein belongs to the eukaryotic RPB8 RNA polymerase subunit family. In terms of assembly, component of the RNA polymerase II, IV and V complexes. Associates with the mediator complex.

The protein resides in the nucleus. DNA-dependent RNA polymerase catalyzes the transcription of DNA into RNA using the four ribonucleoside triphosphates as substrates. Component of RNA polymerase II which synthesizes mRNA precursors and many functional non-coding RNAs. Pol II is the central component of the basal RNA polymerase II transcription machinery. It is composed of mobile elements that move relative to each other. Component of RNA polymerases IV and V which mediate short-interfering RNAs (siRNA) accumulation and subsequent RNA-directed DNA methylation-dependent (RdDM) transcriptional gene silencing (TGS) of endogenous repeated sequences, including transposable elements. The protein is DNA-directed RNA polymerases II, IV and V subunit 8B (NRPB8B) of Arabidopsis thaliana (Mouse-ear cress).